Consider the following 164-residue polypeptide: Transcription factor E (164 aa).

The 83-residue stretch at 5–87 (NDKVIRGYLL…LWRLDFSDIE (83 aa)) folds into the HTH TFE/IIEalpha-type domain.

The protein belongs to the TFE family. As to quaternary structure, monomer. Interaction with RNA polymerase subunits RpoF and RpoE is necessary for Tfe stimulatory transcription activity. Able to interact with Tbp and RNA polymerase in the absence of DNA promoter. Interacts both with the preinitiation and elongation complexes.

Its function is as follows. Transcription factor that plays a role in the activation of archaeal genes transcribed by RNA polymerase. Facilitates transcription initiation by enhancing TATA-box recognition by TATA-box-binding protein (Tbp), and transcription factor B (Tfb) and RNA polymerase recruitment. Not absolutely required for transcription in vitro, but particularly important in cases where Tbp or Tfb function is not optimal. It dynamically alters the nucleic acid-binding properties of RNA polymerases by stabilizing the initiation complex and destabilizing elongation complexes. Seems to translocate with the RNA polymerase following initiation and acts by binding to the non template strand of the transcription bubble in elongation complexes. In Methanosarcina barkeri (strain Fusaro / DSM 804), this protein is Transcription factor E.